The chain runs to 162 residues: uncharacterized protein (162 aa).

This is an uncharacterized protein from Methanocaldococcus jannaschii (strain ATCC 43067 / DSM 2661 / JAL-1 / JCM 10045 / NBRC 100440) (Methanococcus jannaschii).